Consider the following 374-residue polypeptide: Phosphoserine aminotransferase (374 aa).

Position 46 (Arg46) interacts with L-glutamate. Residues 80 to 81, Phe104, Thr150, Asp174, and Gln197 each bind pyridoxal 5'-phosphate; that span reads AT. Lys198 is subject to N6-(pyridoxal phosphate)lysine. 249–250 serves as a coordination point for pyridoxal 5'-phosphate; that stretch reads NT.

Belongs to the class-V pyridoxal-phosphate-dependent aminotransferase family. SerC subfamily. As to quaternary structure, homodimer. It depends on pyridoxal 5'-phosphate as a cofactor.

The protein resides in the cytoplasm. The catalysed reaction is O-phospho-L-serine + 2-oxoglutarate = 3-phosphooxypyruvate + L-glutamate. It catalyses the reaction 4-(phosphooxy)-L-threonine + 2-oxoglutarate = (R)-3-hydroxy-2-oxo-4-phosphooxybutanoate + L-glutamate. Its pathway is amino-acid biosynthesis; L-serine biosynthesis; L-serine from 3-phospho-D-glycerate: step 2/3. It functions in the pathway cofactor biosynthesis; pyridoxine 5'-phosphate biosynthesis; pyridoxine 5'-phosphate from D-erythrose 4-phosphate: step 3/5. Its function is as follows. Catalyzes the reversible conversion of 3-phosphohydroxypyruvate to phosphoserine and of 3-hydroxy-2-oxo-4-phosphonooxybutanoate to phosphohydroxythreonine. This chain is Phosphoserine aminotransferase, found in Nocardioides sp. (strain ATCC BAA-499 / JS614).